The chain runs to 286 residues: F-box/SPRY domain-containing protein 1 (286 aa).

A2 carries the N-acetylalanine modification. In terms of domain architecture, F-box spans 33 to 82 (SGVGGRLPSRVLELVFSYLELSELRSCALVCKHWYRCLHGDENSEVWRSL). The region spanning 92–284 (LRTDILCNLP…VTLVYLGKPL (193 aa)) is the B30.2/SPRY domain.

Belongs to the FBXO45/Fsn family. Forms a complex with MYCBP2 and SKP1. Interacts with HEY1; leading to FBXO45 nuclear translocation. Interacts (via SPRY domain) with CDH2. In terms of tissue distribution, expressed speciffically in the central nervous system, including cerebellum, medulla oblongata, olfactory bulb, hippocampus, cortex and brain stem.

It is found in the secreted. The protein localises to the postsynaptic cell membrane. The protein resides in the presynaptic cell membrane. Its subcellular location is the nucleus. It participates in protein modification; protein ubiquitination. In terms of biological role, component of E3 ubiquitin ligase complex consisting of FBXO45, MYCBP2 and SKP1. Functions in substrate recognition but plays also an important role in assembly of the complex. Required for normal neuromuscular synaptogenesis, axon pathfinding and neuronal migration. Regulates neuron migration during brain development through interaction with N-cadherin/CDH2 after secretion via a non-classical mechanism. Plays a role in the regulation of neurotransmission at mature neurons. May control synaptic activity by controlling UNC13A via ubiquitin dependent pathway. Specifically recognizes TP73, promoting its ubiquitination and degradation. Polyubiquitinates NMNAT2, an adenylyltransferase that acts as an axon maintenance factor, and regulates its stability and degradation by the proteasome. Acts also by ubiquitinating FBXW7 during prolonged mitotic arrest and promotes FBXW7 proteasomal degradation. Induces subsequently an increase in mitotic slippage and prevents mitotic cell death. In response to influenza infection, mediates interferon-lambda receptor IFNLR1 polyubiquitination and degradation through the ubiquitin-proteasome system by docking with its intracellular receptor domain. In Mus musculus (Mouse), this protein is F-box/SPRY domain-containing protein 1.